A 369-amino-acid polypeptide reads, in one-letter code: Aspartate-semialdehyde dehydrogenase (369 aa).

NADP(+) is bound by residues 11–14, 38–39, and Gln-75; these read RGMV and TS. A phosphate-binding site is contributed by Arg-104. The Acyl-thioester intermediate role is filled by Cys-137. Gln-164 is a binding site for substrate. Residues 167 to 168 and Pro-195 contribute to the NADP(+) site; that span reads SG. Residue Glu-243 participates in substrate binding. Lys-246 contributes to the phosphate binding site. Arg-269 contributes to the substrate binding site. The active-site Proton acceptor is the His-276. Gln-352 provides a ligand contact to NADP(+).

Belongs to the aspartate-semialdehyde dehydrogenase family. In terms of assembly, homodimer.

It catalyses the reaction L-aspartate 4-semialdehyde + phosphate + NADP(+) = 4-phospho-L-aspartate + NADPH + H(+). It functions in the pathway amino-acid biosynthesis; L-lysine biosynthesis via DAP pathway; (S)-tetrahydrodipicolinate from L-aspartate: step 2/4. Its pathway is amino-acid biosynthesis; L-methionine biosynthesis via de novo pathway; L-homoserine from L-aspartate: step 2/3. It participates in amino-acid biosynthesis; L-threonine biosynthesis; L-threonine from L-aspartate: step 2/5. Catalyzes the NADPH-dependent formation of L-aspartate-semialdehyde (L-ASA) by the reductive dephosphorylation of L-aspartyl-4-phosphate. The chain is Aspartate-semialdehyde dehydrogenase from Buchnera aphidicola subsp. Baizongia pistaciae (strain Bp).